The primary structure comprises 349 residues: Bifunctional protein FolKE (349 aa).

A 2-amino-4-hydroxy-6-hydroxymethyldihydropteridine pyrophosphokinase region spans residues 1 to 226 (MQTTYLSMGS…LFEIDSSKTD (226 aa)). The tract at residues 226 to 349 (DSIVLIKDIP…KRMEFLESLL (124 aa)) is GTP cyclohydrolase 1.

The protein in the N-terminal section; belongs to the HPPK family. It in the C-terminal section; belongs to the GTP cyclohydrolase I family. As to quaternary structure, homomer.

It carries out the reaction 6-hydroxymethyl-7,8-dihydropterin + ATP = (7,8-dihydropterin-6-yl)methyl diphosphate + AMP + H(+). The enzyme catalyses GTP + H2O = 7,8-dihydroneopterin 3'-triphosphate + formate + H(+). Its pathway is cofactor biosynthesis; 7,8-dihydroneopterin triphosphate biosynthesis; 7,8-dihydroneopterin triphosphate from GTP: step 1/1. The protein operates within cofactor biosynthesis; tetrahydrofolate biosynthesis; 2-amino-4-hydroxy-6-hydroxymethyl-7,8-dihydropteridine diphosphate from 7,8-dihydroneopterin triphosphate: step 4/4. The polypeptide is Bifunctional protein FolKE (folKE) (Lactococcus lactis subsp. lactis (strain IL1403) (Streptococcus lactis)).